The primary structure comprises 440 residues: Tubby-like F-box protein 13 (440 aa).

Positions 51-106 (SCWASLPPELLRDIIERLEESEATWPSRKHVVACAGVCRTWREMCKEIVKNPELCG) constitute an F-box domain.

The protein belongs to the TUB family. As to expression, ubiquitous.

This chain is Tubby-like F-box protein 13 (TULP13), found in Oryza sativa subsp. japonica (Rice).